A 104-amino-acid chain; its full sequence is DNA-directed RNA polymerase subunit omega (104 aa).

The protein belongs to the RNA polymerase subunit omega family. In terms of assembly, the RNAP catalytic core consists of 2 alpha, 1 beta, 1 beta' and 1 omega subunit. When a sigma factor is associated with the core the holoenzyme is formed, which can initiate transcription.

The enzyme catalyses RNA(n) + a ribonucleoside 5'-triphosphate = RNA(n+1) + diphosphate. In terms of biological role, promotes RNA polymerase assembly. Latches the N- and C-terminal regions of the beta' subunit thereby facilitating its interaction with the beta and alpha subunits. This Streptococcus suis (strain 05ZYH33) protein is DNA-directed RNA polymerase subunit omega.